Here is a 937-residue protein sequence, read N- to C-terminus: Hyphally-regulated protein (937 aa).

The N-terminal stretch at 1–20 (MKVVSNFIFTILLTLNLSAA) is a signal peptide. A glycan (N-linked (GlcNAc...) asparagine) is linked at N16. Residues 42 to 62 (VHSGATWAILGTTLCSFFGGL) form a helical membrane-spanning segment. N236 is a glycosylation site (N-linked (GlcNAc...) asparagine). Residues 332–483 (SAPESESDLN…QSITSSPGQS (152 aa)) are disordered. The segment covering 344-392 (TTSSIETSSYSSAATESSVVSESSSAVDSLTSSSLSSKSESSDVVSSTT) has biased composition (low complexity). Positions 393-414 (NIESSSTAIETTMNSESSTDAG) are enriched in polar residues. The segment covering 415–475 (SSSISQSESS…SNALSSTEQS (61 aa)) has biased composition (low complexity). N449, N488, N580, N585, N595, and N603 each carry an N-linked (GlcNAc...) asparagine glycan. A compositionally biased stretch (low complexity) spans 567–590 (DATTTTTTSTGGDNSTGGNESGSN). A disordered region spans residues 567-857 (DATTTTTTST…VANPVTTSTE (291 aa)). The span at 591–609 (HGPGNGSTEGSGNGSGAGS) shows a compositional bias: gly residues. Copy 1 of the repeat occupies 610–613 (NEGS). Residues 610-753 (NEGSQSGPNN…GAGNGSNEGS (144 aa)) are 7 X 4 AA repeats of N-E-G-S. 4 N-linked (GlcNAc...) asparagine glycosylation sites follow: N619, N631, N641, and N649. 2 stretches are compositionally biased toward gly residues: residues 619 to 631 (NGSG…GSNN) and 641 to 665 (NGSG…GSGS). A run of 4 repeats spans residues 666-669 (NEGS), 680-683 (NEGS), 690-693 (NEGS), and 698-701 (NEGS). Low complexity predominate over residues 666–682 (NEGSQSGSGSQPGPNEG). A compositionally biased stretch (gly residues) spans 699 to 725 (EGSGSGSGSGSNNGSGSGSQSGSGSGS). Residue N711 is glycosylated (N-linked (GlcNAc...) asparagine). Positions 726 to 742 (QSGSESGSNSGSNEGSN) are enriched in low complexity. Copy 6 of the repeat occupies 738–741 (NEGS). Residues 743–801 (PGAGNGSNEGSGQGSGNGSEAGSGQGSGPNNGSGSGHNDGSGSGSNQGSNPGAGSGSGS) are compositionally biased toward gly residues. N-linked (GlcNAc...) asparagine glycosylation is present at N747. Repeat 7 spans residues 750–753 (NEGS). N-linked (GlcNAc...) asparagine glycans are attached at residues N759 and N773. A compositionally biased stretch (low complexity) spans 802-814 (ESGSKAGSHSGSN). Residues 817–829 (AKTDSIEGFHTES) are compositionally biased toward basic and acidic residues. The span at 841-851 (ATVTGNSVANP) shows a compositional bias: polar residues. N897 and N913 each carry an N-linked (GlcNAc...) asparagine glycan. N913 is lipidated: GPI-anchor amidated asparagine. Residues 914–937 (GSSIVTGGKSILFGLIVSMVVLFM) constitute a propeptide, removed in mature form.

It localises to the cell membrane. It is found in the secreted. Its subcellular location is the cell wall. Its function is as follows. Nonessential component of the hyphal cell wall. This chain is Hyphally-regulated protein (HYR1), found in Candida albicans (Yeast).